The sequence spans 533 residues: DnaJ homolog subfamily C member 21 (533 aa).

Positions 3-70 (CHYEALGVRR…ERAWYDNHRE (68 aa)) constitute a J domain. Disordered regions lie at residues 278–311 (QFGD…AELY), 327–473 (KAMR…RVPA), and 503–533 (KATG…RKNR). Phosphoserine occurs at positions 283 and 302. Residues 291-302 (QELRDGQDGKDS) are compositionally biased toward basic and acidic residues. Residues 315–339 (YCPACDKSFKTEKAMRNHEKSKKHR) form a C2H2-type 1 zinc finger. Residues 357 to 369 (SGPQTDENSLNAN) show a composition bias toward polar residues. Phosphoserine is present on Ser-370. A compositionally biased stretch (basic residues) spans 381–392 (KLSRKQKKKKQK). Residues 393–403 (PAQNYDDNFNE) are compositionally biased toward polar residues. A compositionally biased stretch (basic residues) spans 455 to 464 (SKPKGKKAKD). A C2H2-type 2 zinc finger spans residues 484-508 (SCTTCHSEFPSRNKLFDHLKATGHA). Ser-512 carries the phosphoserine modification. Residues 512 to 523 (SSSTSLNSVTNS) show a composition bias toward low complexity. Basic residues predominate over residues 524-533 (RNKKEKRKNR).

In terms of assembly, interacts with HSPA8, PA2G4 and ZNF622.

The protein resides in the cytoplasm. The protein localises to the nucleus. It is found in the nucleolus. Its function is as follows. May act as a co-chaperone for HSP70. May play a role in ribosomal RNA (rRNA) biogenesis, possibly in the maturation of the 60S subunit. Binds the precursor 45S rRNA. The chain is DnaJ homolog subfamily C member 21 (DNAJC21) from Bos taurus (Bovine).